Reading from the N-terminus, the 445-residue chain is Phosphoglucosamine mutase (445 aa).

S101 serves as the catalytic Phosphoserine intermediate. Residues S101, D240, D242, and D244 each contribute to the Mg(2+) site. Position 101 is a phosphoserine (S101).

Belongs to the phosphohexose mutase family. Requires Mg(2+) as cofactor. Activated by phosphorylation.

The enzyme catalyses alpha-D-glucosamine 1-phosphate = D-glucosamine 6-phosphate. In terms of biological role, catalyzes the conversion of glucosamine-6-phosphate to glucosamine-1-phosphate. In Pseudomonas fluorescens (strain ATCC BAA-477 / NRRL B-23932 / Pf-5), this protein is Phosphoglucosamine mutase.